The sequence spans 771 residues: Putative 8-amino-7-oxononanoate synthase 2 (771 aa).

Residues 1–418 (MPTGLGYDFL…TVKAAELGEI (418 aa)) are unknown. Arginine 407 lines the substrate pocket. The segment at 419 to 771 (VLLGTNSYLG…EDLTPQGAAL (353 aa)) is KAPA synthase. 485 to 486 (GY) serves as a coordination point for pyridoxal 5'-phosphate. Histidine 510 serves as a coordination point for substrate. Pyridoxal 5'-phosphate is bound by residues serine 556 and 581-584 (DESH). Lysine 615 is subject to N6-(pyridoxal phosphate)lysine.

The protein in the C-terminal section; belongs to the class-II pyridoxal-phosphate-dependent aminotransferase family. BioF subfamily. The cofactor is pyridoxal 5'-phosphate.

The enzyme catalyses 6-carboxyhexanoyl-[ACP] + L-alanine + H(+) = (8S)-8-amino-7-oxononanoate + holo-[ACP] + CO2. Catalyzes the decarboxylative condensation of pimeloyl-[acyl-carrier protein] and L-alanine to produce 8-amino-7-oxononanoate (AON), [acyl-carrier protein], and carbon dioxide. This Mycobacterium tuberculosis (strain CDC 1551 / Oshkosh) protein is Putative 8-amino-7-oxononanoate synthase 2 (bioF2).